Here is a 126-residue protein sequence, read N- to C-terminus: Holo-[acyl-carrier-protein] synthase (126 aa).

Residues Asp6 and Glu55 each contribute to the Mg(2+) site.

Belongs to the P-Pant transferase superfamily. AcpS family. The cofactor is Mg(2+).

The protein resides in the cytoplasm. The enzyme catalyses apo-[ACP] + CoA = holo-[ACP] + adenosine 3',5'-bisphosphate + H(+). In terms of biological role, transfers the 4'-phosphopantetheine moiety from coenzyme A to a Ser of acyl-carrier-protein. The sequence is that of Holo-[acyl-carrier-protein] synthase from Chlorobium limicola (strain DSM 245 / NBRC 103803 / 6330).